Here is a 199-residue protein sequence, read N- to C-terminus: Heparin-binding hemagglutinin (199 aa).

Low complexity predominate over residues 162 to 180 (KAAPAKKAAPAKKAAPAKK). Residues 162–199 (KAAPAKKAAPAKKAAPAKKAAAKKAPAKKAAAKKVTQK) are disordered. The segment covering 181 to 199 (AAAKKAPAKKAAAKKVTQK) has biased composition (basic residues).

To M.leprae HbhA. Post-translationally, glycosylated. Glycosylation may protect the protein from proteolytic degradation and be important for hemagglutination. It suggests that the carbohydrate moiety may be located within the C-terminal domain of HbhA.

It is found in the cell surface. Its function is as follows. Required for extrapulmonary dissemination. Mediates adherence to epithelial cells by binding to sulfated glycoconjugates present at the surface of these cells. The sequence is that of Heparin-binding hemagglutinin (hbhA) from Mycobacterium tuberculosis (strain CDC 1551 / Oshkosh).